We begin with the raw amino-acid sequence, 693 residues long: TBC1 domain family member 14 (693 aa).

A Phosphoserine modification is found at serine 91. 2 disordered regions span residues 108-130 and 271-304; these read PSCAPPAPSSTEREQSVRKSSTF and NAQKDSKRIQKEYEDKAGRPSKPPSPKQNVRKNL. A compositionally biased stretch (basic and acidic residues) spans 271-288; the sequence is NAQKDSKRIQKEYEDKAG. Position 295 is a phosphoserine (serine 295). The Rab-GAP TBC domain occupies 401-611; that stretch reads GIPPSVRGKV…RIWDVFCRDG (211 aa).

Interacts with ULK1. May interact with RAB11A and RAB11B, but does not exhibit any GTPase-activating activity toward these proteins. Interacts with TRAPPC8.

The protein localises to the golgi apparatus. It localises to the cis-Golgi network. The protein resides in the trans-Golgi network. Functionally, plays a role in the regulation of starvation-induced autophagosome formation. Together with the TRAPPIII complex, regulates a constitutive trafficking step from peripheral recycling endosomes to the early Golgi, maintaining the cycling pool of ATG9 required for initiation of autophagy. This chain is TBC1 domain family member 14 (TBC1D14), found in Homo sapiens (Human).